Reading from the N-terminus, the 158-residue chain is Sec-independent protein translocase protein TatB (158 aa).

A helical transmembrane segment spans residues 1-21 (MFGISFSELLLVGLVALLVLG). A disordered region spans residues 73–158 (DEARKMFAPN…HDSSLPPRAP (86 aa)). Residues 80 to 90 (APNQPSENSPE) show a composition bias toward low complexity.

This sequence belongs to the TatB family. In terms of assembly, the Tat system comprises two distinct complexes: a TatABC complex, containing multiple copies of TatA, TatB and TatC subunits, and a separate TatA complex, containing only TatA subunits. Substrates initially bind to the TatABC complex, which probably triggers association of the separate TatA complex to form the active translocon.

It is found in the cell inner membrane. Functionally, part of the twin-arginine translocation (Tat) system that transports large folded proteins containing a characteristic twin-arginine motif in their signal peptide across membranes. Together with TatC, TatB is part of a receptor directly interacting with Tat signal peptides. TatB may form an oligomeric binding site that transiently accommodates folded Tat precursor proteins before their translocation. This is Sec-independent protein translocase protein TatB from Pseudomonas syringae pv. syringae (strain B728a).